Reading from the N-terminus, the 115-residue chain is Aspartate 1-decarboxylase (115 aa).

The active-site Schiff-base intermediate with substrate; via pyruvic acid is the S25. S25 is subject to Pyruvic acid (Ser). Substrate is bound at residue T57. Y58 functions as the Proton donor in the catalytic mechanism. 71–73 (GAA) serves as a coordination point for substrate.

The protein belongs to the PanD family. Heterooctamer of four alpha and four beta subunits. Pyruvate serves as cofactor. Is synthesized initially as an inactive proenzyme, which is activated by self-cleavage at a specific serine bond to produce a beta-subunit with a hydroxyl group at its C-terminus and an alpha-subunit with a pyruvoyl group at its N-terminus.

Its subcellular location is the cytoplasm. The catalysed reaction is L-aspartate + H(+) = beta-alanine + CO2. It participates in cofactor biosynthesis; (R)-pantothenate biosynthesis; beta-alanine from L-aspartate: step 1/1. Catalyzes the pyruvoyl-dependent decarboxylation of aspartate to produce beta-alanine. This chain is Aspartate 1-decarboxylase, found in Campylobacter concisus (strain 13826).